A 563-amino-acid chain; its full sequence is Choline transporter (563 aa).

A disordered region spans residues 1-25 (MSIRNDNASGGYMQPDQSSNASMHK). Topologically, residues 1–57 (MSIRNDNASGGYMQPDQSSNASMHKRDLRVEEEIKPLDDMDSKGAVAADGEVHLRKS) are extracellular. N-linked (GlcNAc...) asparagine glycans are attached at residues Asn-7 and Asn-20. A phosphoserine mark is found at Ser-22 and Ser-42. Residues 58–78 (FSLWSILGVGFGLTNSWFGIS) traverse the membrane as a helical segment. Residues 79-87 (TSMVAGISS) are Cytoplasmic-facing. A helical transmembrane segment spans residues 88-108 (GGPMMIVYGIIIVALISICIG). Residues 109 to 182 (TSLGELSSAY…LTHPEFIPKR (74 aa)) are Extracellular-facing. A helical membrane pass occupies residues 183–203 (WHIFVCFELLHLFLMFFNCYG). Residues 204 to 205 (KS) lie on the Cytoplasmic side of the membrane. The helical transmembrane segment at 206 to 226 (LPIISSSSLYISLLSFFTITI) threads the bilayer. Topologically, residues 227-255 (TVLACSHGKFNDAKFVFATFNNETGWKNG) are extracellular. Asn-248 carries N-linked (GlcNAc...) asparagine glycosylation. A helical transmembrane segment spans residues 256 to 276 (GIAFIVGLINPAWSFSCLDCA). Residues 277–293 (THMAFEVEKPERVIPIA) are Cytoplasmic-facing. Residues 294-314 (IMGTVAIGFVTSFCYVIAMFF) form a helical membrane-spanning segment. The Extracellular segment spans residues 315–342 (SIQDLDAVLSSTTGAPILDIYNQALGNK). The N-linked (GlcNAc...) asparagine glycan is linked to Asn-341. Residues 343 to 363 (SGAIFLGCLILFTSFGCVIAC) form a helical membrane-spanning segment. The Cytoplasmic segment spans residues 364-398 (HTWQARLCWSFARDNGLPLSRLWSQVNPHTGVPLN). The helical transmembrane segment at 399-417 (AHLMSCAWITLIGLLYLAS) threads the bilayer. Topologically, residues 418–426 (STAFQSLIT) are extracellular. Residues 427-445 (GCIAFLLLSYIIPVICLLA) form a helical membrane-spanning segment. At 446–465 (KKRNIAHGPFWLGKFGFFSN) the chain is on the cytoplasmic side. A helical transmembrane segment spans residues 466–486 (IVLLGWTVFSVVFFSFPPVLP). The Extracellular segment spans residues 487-491 (VTKDN). A helical membrane pass occupies residues 492–512 (MNYVCVVIVGYTAYSILYWKY). The Cytoplasmic segment spans residues 513–563 (KGKKEFHALEESENEQAEYSNNFDTIEDSREFSVAASDVELENEHVPWGKK).

This sequence belongs to the amino acid-polyamine-organocation (APC) superfamily. Amino acid/choline transporter (ACT) (TC 2.A.3.4) family.

Its subcellular location is the membrane. The catalysed reaction is choline(out) = choline(in). The enzyme catalyses ethanolamine(in) = ethanolamine(out). In terms of biological role, sole choline transporter in yeast. Also transports ethanolamine. This Saccharomyces cerevisiae (strain ATCC 204508 / S288c) (Baker's yeast) protein is Choline transporter (HNM1).